Reading from the N-terminus, the 232-residue chain is 5'-methylthioadenosine/S-adenosylhomocysteine nucleosidase (232 aa).

Glu-12 serves as the catalytic Proton acceptor. Substrate contacts are provided by residues Gly-78, Ile-152, and 173–174 (ME). Residue Asp-197 is the Proton donor of the active site.

It belongs to the PNP/UDP phosphorylase family. MtnN subfamily. In terms of assembly, homodimer.

It catalyses the reaction S-adenosyl-L-homocysteine + H2O = S-(5-deoxy-D-ribos-5-yl)-L-homocysteine + adenine. The catalysed reaction is S-methyl-5'-thioadenosine + H2O = 5-(methylsulfanyl)-D-ribose + adenine. The enzyme catalyses 5'-deoxyadenosine + H2O = 5-deoxy-D-ribose + adenine. It participates in amino-acid biosynthesis; L-methionine biosynthesis via salvage pathway; S-methyl-5-thio-alpha-D-ribose 1-phosphate from S-methyl-5'-thioadenosine (hydrolase route): step 1/2. Its function is as follows. Catalyzes the irreversible cleavage of the glycosidic bond in both 5'-methylthioadenosine (MTA) and S-adenosylhomocysteine (SAH/AdoHcy) to adenine and the corresponding thioribose, 5'-methylthioribose and S-ribosylhomocysteine, respectively. Also cleaves 5'-deoxyadenosine, a toxic by-product of radical S-adenosylmethionine (SAM) enzymes, into 5-deoxyribose and adenine. Thus, is required for in vivo function of the radical SAM enzymes biotin synthase and lipoic acid synthase, that are inhibited by 5'-deoxyadenosine accumulation. The protein is 5'-methylthioadenosine/S-adenosylhomocysteine nucleosidase of Cronobacter sakazakii (strain ATCC BAA-894) (Enterobacter sakazakii).